A 355-amino-acid polypeptide reads, in one-letter code: Hydroxylysine kinase (355 aa).

The active-site Proton acceptor is the Asp215.

This sequence belongs to the aminoglycoside phosphotransferase family.

It is found in the cytoplasm. The catalysed reaction is (5R)-5-hydroxy-L-lysine + GTP = (5R)-5-phosphooxy-L-lysine + GDP + H(+). Functionally, catalyzes the GTP-dependent phosphorylation of 5-hydroxy-L-lysine. This Danio rerio (Zebrafish) protein is Hydroxylysine kinase (hykk).